A 156-amino-acid chain; its full sequence is Rhombotin-1 (156 aa).

LIM zinc-binding domains follow at residues 22 to 84 (KGCA…LFGT) and 86 to 148 (GNCA…GQLN).

Its subcellular location is the nucleus. Functionally, may be involved in gene regulation within neural lineage cells potentially by direct DNA binding or by binding to other transcription factors. The chain is Rhombotin-1 from Xenopus laevis (African clawed frog).